The sequence spans 1394 residues: Kinesin-like protein KIF27 (1394 aa).

Residues 5-341 (PIKVAVRIRP…LKYANRARNI (337 aa)) enclose the Kinesin motor domain. 84 to 91 (GQTGSGKT) is a binding site for ATP. Coiled-coil stretches lie at residues 352-418 (QADR…IEQA) and 498-554 (QKDL…ELAK). Disordered stretches follow at residues 559-582 (VPTS…RPHT) and 642-665 (FSDN…RSHS). The span at 571-580 (PDARASEKRP) shows a compositional bias: basic and acidic residues. A phosphoserine mark is found at S643, S646, S672, S675, and S704. Coiled coils occupy residues 709–891 (LQKL…GQGE), 921–1078 (LDEQ…SIQS), 1118–1152 (NKVI…HELE), and 1186–1226 (DQDG…RLKD). A disordered region spans residues 886 to 916 (KAGQGEGLNPKAEDQDGFNLNRRKSPFRSGD). Position 999 is a phosphoserine (S999). A compositionally biased stretch (basic and acidic residues) spans 1267–1280 (TENTKLNGSEREVD). 2 disordered regions span residues 1267 to 1319 (TENT…LQSI) and 1325 to 1344 (ARPF…PVRS). 2 stretches are compositionally biased toward polar residues: residues 1281-1295 (NSSS…TQQI) and 1309-1319 (IAPSSGQLQSI). Residues S1365 and S1387 each carry the phosphoserine modification.

The protein belongs to the TRAFAC class myosin-kinesin ATPase superfamily. Kinesin family. KIF27 subfamily. As to quaternary structure, interacts with STK36.

Its subcellular location is the cytoplasm. It is found in the cytoskeleton. The protein resides in the cell projection. It localises to the cilium. Its function is as follows. Plays an essential role in motile ciliogenesis. The chain is Kinesin-like protein KIF27 (Kif27) from Mus musculus (Mouse).